The sequence spans 70 residues: MMNKDEAGGNWKQFKGKMKEQWGKLTDDDMTVIEGKRDQLVGKIQERYGYQKDQAEKEVVDWETRNNYRW.

This sequence belongs to the UPF0337 (CsbD) family.

The protein is UPF0337 protein YjbJ (yjbJ) of Salmonella typhi.